The primary structure comprises 1303 residues: Latent-transforming growth factor beta-binding protein 3 (1303 aa).

The signal sequence occupies residues 1 to 43 (MPGPRGAAGGLAPEMRGAGAAGLLALLLLLLLLLLGLGGRVEG). N89 carries an N-linked (GlcNAc...) asparagine glycan. The region spanning 109 to 141 (RVVVCPLPCMNGGQCSSRNQCLCPPDFTGRFCQ) is the EGF-like 1 domain. 6 disulfides stabilise this stretch: C113-C123, C117-C129, C131-C140, C279-C303, C289-C316, and C304-C319. Residues 247–282 (SSNAESAAPSQHLLPHPKPSHPRPPTQKPLGRCFQD) form a disordered region. The 55-residue stretch at 277–331 (GRCFQDTLPKQPCGSNPLPGLTKQEDCCGSIGTAWGQSKCHKCPQLQYTGVQKPG) folds into the TB 1 domain. N-linked (GlcNAc...) asparagine glycosylation is present at N349. Positions 355 to 395 (DINECAMPGVCRHGDCLNNPGSYRCVCPPGHSLGPSRTQCI) constitute an EGF-like 2; calcium-binding domain. Disulfide bonds link C359/C370, C365/C379, C381/C394, C405/C428, C415/C440, C429/C443, and C430/C455. The TB 2 domain occupies 403 to 455 (SLCFRLVSPEHQCQHPLTTRLTRQLCCCSVGKAWGARCQRCPTDGTAAFKEIC). Residues 478 to 552 (FSLFLHPDGP…ISRPSPPTMR (75 aa)) form a disordered region. Residues 529–540 (PTATTTPARPYP) are compositionally biased toward low complexity. The EGF-like 3 domain maps to 574 to 615 (ETDECRLNQNICGHGECVPGPPDYSCHCNPGYRSHPQHRYCV). 37 cysteine pairs are disulfide-bonded: C578–C590, C585–C599, C601–C614, C620–C632, C625–C641, C664–C676, C670–C685, C687–C701, C748–C759, C754–C768, C770–C783, C789–C800, C795–C809, C811–C824, C830–C841, C836–C850, C852–C864, C870–C883, C877–C892, C894–C907, C919–C942, C929–C954, C943–C959, C944–C971, C997–C1010, C1005–C1019, C1021–C1034, C1040–C1051, C1046–C1060, C1062–C1075, C1086–C1097, C1092–C1106, C1108–C1121, C1138–C1162, C1148–C1174, C1163–C1177, and C1164–C1186. The EGF-like 4; calcium-binding domain occupies 616–659 (DVNECEAEPCGPGRGICMNTGGSYNCHCNRGYRLHVGAGGRSCV). In terms of domain architecture, EGF-like 5; calcium-binding spans 660–702 (DLNECAKPHLCGDGGFCINFPGHYKCNCYPGYRLKASRPPVCE). The region spanning 744-784 (DVNECAEGSPCSPGWCENLPGSFRCTCAQGYAPAPDGRSCL) is the EGF-like 6; calcium-binding domain. In terms of domain architecture, EGF-like 7; calcium-binding spans 785–825 (DVDECEAGDVCDNGICSNTPGSFQCQCLSGYHLSRDRSHCE). One can recognise an EGF-like 8; calcium-binding domain in the interval 826–865 (DIDECDFPAACIGGDCINTNGSYRCLCPQGHRLVGGRKCQ). The N-linked (GlcNAc...) asparagine glycan is linked to N845. The region spanning 866-908 (DIDECSQDPSLCLPHGACKNLQGSYVCVCDEGFTPTQDQHGCE) is the EGF-like 9; calcium-binding domain. One can recognise a TB 3 domain in the interval 917 to 971 (KECYLNFDDTVFCDSVLATNVTQQECCCSLGAGWGDHCEIYPCPVYSSAEFHSLC). A glycan (N-linked (GlcNAc...) asparagine) is linked at N936. Residues 993–1035 (DIDECMLFGSEICKEGKCVNTQPGYECYCKQGFYYDGNLLECV) enclose the EGF-like 10; calcium-binding domain. Residues 1036–1076 (DVDECLDESNCRNGVCENTRGGYRCACTPPAEYSPAQRQCL) enclose the EGF-like 11; calcium-binding domain. Residues 1082-1122 (DVDECQDPAACRPGRCVNLPGSYRCECRPPWVPGPSGRDCQ) enclose the EGF-like 12; calcium-binding domain. A TB 4 domain is found at 1136–1186 (DVCWSQRGEDGMCAGPLAGPALTFDDCCCRQGRGWGAQCRPCPPRGAGSHC). Residues 1188 to 1198 (TSQSESNSFWD) are compositionally biased toward polar residues. Positions 1188–1219 (TSQSESNSFWDTSPLLLGKPPRDEDSSEEDSD) are disordered. The EGF-like 13; calcium-binding domain occupies 1254–1298 (DIDECRELNQRGLLCKSERCVNTSGSFRCVCKAGFARSRPHGACV). Intrachain disulfides connect C1258/C1273 and C1268/C1282. Residue N1275 is glycosylated (N-linked (GlcNAc...) asparagine).

It belongs to the LTBP family. In terms of assembly, forms part of the large latent transforming growth factor beta precursor complex; removal is essential for activation of complex. Interacts with EFEMP2. In terms of processing, contains hydroxylated asparagine residues. Post-translationally, two intrachain disulfide bonds from the TB3 domain are rearranged upon TGFB1 binding, and form interchain bonds with TGFB1 propeptide, anchoring it to the extracellular matrix. In terms of tissue distribution, isoform 2: Expressed prominently in heart, skeletal muscle, prostate, testis, small intestine and ovary. Isoform 1: Strongly expressed in pancreas and liver.

The protein localises to the secreted. The protein resides in the extracellular space. It is found in the extracellular matrix. Its function is as follows. Key regulator of transforming growth factor beta (TGFB1, TGFB2 and TGFB3) that controls TGF-beta activation by maintaining it in a latent state during storage in extracellular space. Associates specifically via disulfide bonds with the Latency-associated peptide (LAP), which is the regulatory chain of TGF-beta, and regulates integrin-dependent activation of TGF-beta. This Homo sapiens (Human) protein is Latent-transforming growth factor beta-binding protein 3 (LTBP3).